Reading from the N-terminus, the 1094-residue chain is Transport and Golgi organization protein 6 homolog (1094 aa).

Residues 468 to 488 (LTVLMDSLLPVLGVLFLLYCF) form a helical membrane-spanning segment. A Phosphoserine modification is found at Ser556. Residues 777 to 795 (EEQQQTSHERPTDVAHSHL) show a composition bias toward basic and acidic residues. The disordered stretch occupies residues 777–834 (EEQQQTSHERPTDVAHSHLEQQQSHETAPQTGLQSNAPIIPQGVNEPSTTTSQKSGSV). Composition is skewed to polar residues over residues 796–813 (EQQQ…QSNA) and 821–834 (NEPS…SGSV). HEAT repeat units follow at residues 873–909 (LEMQ…SDVY) and 952–988 (SKYR…CQRL).

The protein belongs to the Tango6 family.

The protein localises to the membrane. This chain is Transport and Golgi organization protein 6 homolog (TANGO6), found in Homo sapiens (Human).